A 1241-amino-acid polypeptide reads, in one-letter code: DNA-directed RNA polymerase subunit beta (1241 aa).

The disordered stretch occupies residues 1195 to 1219 (PQDVQENVSGENVDAGYENEDVDID).

It belongs to the RNA polymerase beta chain family. The RNAP catalytic core consists of 2 alpha, 1 beta, 1 beta' and 1 omega subunit. When a sigma factor is associated with the core the holoenzyme is formed, which can initiate transcription.

The catalysed reaction is RNA(n) + a ribonucleoside 5'-triphosphate = RNA(n+1) + diphosphate. In terms of biological role, DNA-dependent RNA polymerase catalyzes the transcription of DNA into RNA using the four ribonucleoside triphosphates as substrates. This is DNA-directed RNA polymerase subunit beta from Clostridium acetobutylicum (strain ATCC 824 / DSM 792 / JCM 1419 / IAM 19013 / LMG 5710 / NBRC 13948 / NRRL B-527 / VKM B-1787 / 2291 / W).